Reading from the N-terminus, the 655-residue chain is Golgi integral membrane protein 4 (655 aa).

Glycine 2 carries N-myristoyl glycine lipidation. The Cytoplasmic portion of the chain corresponds to 2–12 (GNGMCSRKQKR). Residues 13 to 33 (IFQTLLLLTVVFGFLYGAMLY) form a helical; Signal-anchor for type II membrane protein membrane-spanning segment. Over 34-655 (LELQTQLRKA…AEKSHRRAEM (622 aa)) the chain is Lumenal. The tract at residues 38–107 (TQLRKAEAVA…ETLNKGRQDS (70 aa)) is golgi targeting. The stretch at 66 to 216 (EHRSRLEKSL…KQLKDTLNRI (151 aa)) forms a coiled coil. The interval 80 to 175 (LEHKKAKEDF…QELSKLKETV (96 aa)) is endosome targeting. Positions 122–145 (KSQHEELRKQHSDLEEEHRKQGED) are disordered. A compositionally biased stretch (basic and acidic residues) spans 123–145 (SQHEELRKQHSDLEEEHRKQGED). Positions 176–220 (YNLREENRQLRKAHQDIHTQLQDVKTQVAEYKQLKDTLNRIPSFR) are golgi targeting. A glycan (N-linked (GlcNAc...) asparagine) is linked at asparagine 229. 2 disordered regions span residues 256–275 (QPNH…SSMQ) and 285–655 (EQNQ…RAEM). 4 stretches are compositionally biased toward basic and acidic residues: residues 261-270 (AGPRRMEEKP), 290-307 (EPRE…RKAL), 319-328 (EHLEEEHDPS), and 348-360 (LDGH…EHST). Position 328 is a phosphoserine (serine 328). Residues 361–370 (KAATNFQSPY) are compositionally biased toward polar residues. Residues 381–398 (ARRDEEAQRLREHQEALH) are compositionally biased toward basic and acidic residues. Low complexity-rich tracts occupy residues 399 to 423 (QQRL…MAQQ) and 433 to 442 (QQHQEQLRQQ). Residues 468 to 508 (AYDRDNQRQDEAEGDPGNRQELREPGHQEGDPEVEADRAAV) show a composition bias toward basic and acidic residues. Position 540 is a phosphoserine (serine 540). The span at 567 to 589 (QQEDNVDEQYQDEGEEEVQEDLT) shows a compositional bias: acidic residues. Position 576 is a phosphotyrosine (tyrosine 576). At threonine 589 the chain carries Phosphothreonine. A compositionally biased stretch (basic and acidic residues) spans 590-620 (EEKKREMEHNVEETYGEHPDDKNNDGEEQGV). At tyrosine 633 the chain carries Phosphotyrosine. Acidic residues predominate over residues 633 to 642 (YEEEEDEEDG).

It belongs to the GOLIM4 family. Phosphorylated by c-AMP-dependent kinases most probably in its lumenal part. In terms of processing, O-glycosylated; modified by sialic acid residues. Post-translationally, N-glycosylated; N-glycans are of the complex type and modified by sialic acid residues. As to expression, expressed by spermatozoa (at protein level).

Its subcellular location is the golgi apparatus. The protein resides in the golgi stack membrane. It localises to the endosome membrane. The protein localises to the membrane. Functionally, plays a role in endosome to Golgi protein trafficking; mediates protein transport along the late endosome-bypass pathway from the early endosome to the Golgi. The chain is Golgi integral membrane protein 4 (Golim4) from Mus musculus (Mouse).